Consider the following 1070-residue polypeptide: [F-actin]-monooxygenase MICAL1 (1070 aa).

A monooxygenase domain region spans residues Met-1–Glu-489. FAD contacts are provided by residues Cys-95, Glu-114–Arg-116, Arg-121–Asn-123, Phe-181, Tyr-293, and Asp-393. Thr-475 bears the Phosphothreonine mark. The 105-residue stretch at Val-508–Lys-612 folds into the Calponin-homology (CH) domain. The interval Gln-643–Asp-690 is disordered. Basic and acidic residues predominate over residues Arg-646–Ala-665. A compositionally biased stretch (pro residues) spans Glu-671 to Pro-684. The 63-residue stretch at Asp-695–Glu-757 folds into the LIM zinc-binding domain. Zn(2+) is bound by residues Cys-697, Cys-700, His-718, Cys-721, Cys-724, Cys-727, Cys-747, and His-750. Disordered regions lie at residues Thr-754 to Ser-838 and Met-865 to Pro-887. Residues Gly-755–Glu-766 show a composition bias toward basic and acidic residues. The span at Leu-770–Gly-781 shows a compositional bias: polar residues. Ser-793, Ser-875, and Ser-876 each carry phosphoserine. Residues Ser-876 to Pro-887 are compositionally biased toward acidic residues. Residues Gly-904 to Gly-1070 are important for interaction with RAB8A. The bMERB domain occupies Lys-921–Gly-1070. A coiled-coil region spans residues Phe-928–Arg-1030. The residue at position 1060 (Ser-1060) is a Phosphoserine.

The protein belongs to the Mical family. In terms of assembly, interacts with STK38 and STK38L. Associates with the SH3 domain of NEDD9. Interacts with VIM and PLXNA3. Interacts with RAB1B, RAB8A, RAB10, RAB13 and RAB15 (in their GTP-bound forms); binding to RAB1B is of low affinity compared to other Rab proteins; at least in case of RAB8A and RAB10 can bind 2 molecules of the Rab proteins simultaneously. Interacts with GRAF1/ARHGAP26, GRAF2/ARHGAP10, RAB8A, RAB8B and RAB10; may bind simultaneously to GRAFs and Rabs and connects GRAFs to Rabs. Does not interact with RAB1 and RAB11A. FAD serves as cofactor.

It localises to the cytoplasm. The protein resides in the cytoskeleton. Its subcellular location is the endosome membrane. It is found in the midbody. It catalyses the reaction L-methionyl-[F-actin] + NADPH + O2 + H(+) = L-methionyl-(R)-S-oxide-[F-actin] + NADP(+) + H2O. It carries out the reaction NADPH + O2 + H(+) = H2O2 + NADP(+). Its function is as follows. Monooxygenase that promotes depolymerization of F-actin by mediating oxidation of specific methionine residues on actin to form methionine-sulfoxide, resulting in actin filament disassembly and preventing repolymerization. In the absence of actin, it also functions as a NADPH oxidase producing H(2)O(2). Acts as a cytoskeletal regulator that connects NEDD9 to intermediate filaments. Also acts as a negative regulator of apoptosis via its interaction with STK38 and STK38L; acts by antagonizing STK38 and STK38L activation by MST1/STK4. Involved in regulation of lamina-specific connectivity in the nervous system such as the development of lamina-restricted hippocampal connections. Through redox regulation of the actin cytoskeleton controls the intracellular distribution of secretory vesicles containing L1/neurofascin/NgCAM family proteins in neurons, thereby regulating their cell surface levels. May act as Rab effector protein and play a role in vesicle trafficking. Promotes endosomal tubule extension by associating with RAB8 (RAB8A or RAB8B), RAB10 and GRAF (GRAF1/ARHGAP26 or GRAF2/ARHGAP10) on the endosomal membrane which may connect GRAFs to Rabs, thereby participating in neosynthesized Rab8-Rab10-Rab11-dependent protein export. This Bos taurus (Bovine) protein is [F-actin]-monooxygenase MICAL1 (MICAL1).